The following is a 132-amino-acid chain: UPF0299 membrane protein KPN78578_25390 (132 aa).

The next 4 membrane-spanning stretches (helical) occupy residues 5 to 25 (LTII…LYAG), 38 to 60 (GSII…PQWV), 66 to 86 (ILIR…MQYW), and 93 to 113 (LGPV…VVSW).

This sequence belongs to the UPF0299 family.

Its subcellular location is the cell inner membrane. This chain is UPF0299 membrane protein KPN78578_25390, found in Klebsiella pneumoniae subsp. pneumoniae (strain ATCC 700721 / MGH 78578).